The sequence spans 1050 residues: DNA polymerase I A, chloroplastic/mitochondrial (1050 aa).

A chloroplast and mitochondrion-targeting transit peptide spans 1–91 (MAMGVSLTSH…VVFNGEWELR (91 aa)). The disordered stretch occupies residues 202–240 (PRKGLDVGDNMDVNPKGEGIQRPLISDKSSGTANGNKNT). Over residues 228-240 (DKSSGTANGNKNT) the composition is skewed to polar residues. A 3'-5' exonuclease domain is found at 312–490 (ELICFSIYCG…LYESMTKKLQ (179 aa)). The segment at 673-694 (VVEDDDVETSETQKSKTDDETD) is disordered. A polymerase region spans residues 717–1048 (AIASLCEVCS…DAKCAQNWYA (332 aa)).

This sequence belongs to the DNA polymerase type-A family. As to expression, expressed in shoot apical meristem.

The protein localises to the plastid. It is found in the chloroplast. It localises to the mitochondrion. It catalyses the reaction DNA(n) + a 2'-deoxyribonucleoside 5'-triphosphate = DNA(n+1) + diphosphate. With respect to regulation, not inhibited by aphidicolin. Its function is as follows. In addition to polymerase activity, this DNA polymerase exhibits 5'-3' exonuclease activity. Required for DNA replication and accumulation in plastids and mitochondria. May be required for DNA repair in both organelles. The sequence is that of DNA polymerase I A, chloroplastic/mitochondrial (POLIA) from Arabidopsis thaliana (Mouse-ear cress).